Here is a 230-residue protein sequence, read N- to C-terminus: Probable septum site-determining protein MinC (230 aa).

Belongs to the MinC family. Interacts with MinD and FtsZ.

Cell division inhibitor that blocks the formation of polar Z ring septums. Rapidly oscillates between the poles of the cell to destabilize FtsZ filaments that have formed before they mature into polar Z rings. Prevents FtsZ polymerization. In Erwinia tasmaniensis (strain DSM 17950 / CFBP 7177 / CIP 109463 / NCPPB 4357 / Et1/99), this protein is Probable septum site-determining protein MinC.